We begin with the raw amino-acid sequence, 312 residues long: MNPLTQVKRTQVINQKEALLGIGEDGSWHAKFKDSAYVFVGGIPYDLTEGDLLAVFAQYGEVVDVNLVRDKGTGKSKGFAFLAYEDQRSTILAVDNLNGAKVLGRIVRVDHVSKYKKKEEEDEEELQKKREARGVCYAFQKGECNRGASCRYSHDEQRNANTGWGSKEESKARWEHDRHHEPPMSHKKFPSSAGEQRFPDRAKEENKSTGREGQSSRSEAYKDRDSRLRHSDRGSKDHDRYRHDRSPERSRGDRQRNNDRYAQGRDEKSERYRSEVKHDEGDQKRSRRDTDSSGHYERRGNEDSERYRKSRR.

The RRM domain occupies 36–114 (AYVFVGGIPY…RIVRVDHVSK (79 aa)). The segment at 130 to 157 (REARGVCYAFQKGECNRGASCRYSHDEQ) adopts a C3H1-type zinc-finger fold. The segment at 153-312 (SHDEQRNANT…DSERYRKSRR (160 aa)) is disordered. Composition is skewed to basic and acidic residues over residues 166–184 (SKEE…EPPM), 197–210 (RFPD…KSTG), and 219–312 (EAYK…KSRR).

The polypeptide is Zinc finger CCCH domain-containing protein 25 (Oryza sativa subsp. japonica (Rice)).